The sequence spans 339 residues: Anthranilate phosphoribosyltransferase (339 aa).

Residues G81, 84 to 85, S89, 91 to 94, 109 to 117, and A121 each bind 5-phospho-alpha-D-ribose 1-diphosphate; these read GD, NVST, and KHGNRALSS. G81 is an anthranilate binding site. Mg(2+) is bound at residue S93. Residue N112 coordinates anthranilate. Position 167 (R167) interacts with anthranilate. Mg(2+)-binding residues include D226 and E227.

Belongs to the anthranilate phosphoribosyltransferase family. As to quaternary structure, homodimer. The cofactor is Mg(2+).

It carries out the reaction N-(5-phospho-beta-D-ribosyl)anthranilate + diphosphate = 5-phospho-alpha-D-ribose 1-diphosphate + anthranilate. The protein operates within amino-acid biosynthesis; L-tryptophan biosynthesis; L-tryptophan from chorismate: step 2/5. Its function is as follows. Catalyzes the transfer of the phosphoribosyl group of 5-phosphorylribose-1-pyrophosphate (PRPP) to anthranilate to yield N-(5'-phosphoribosyl)-anthranilate (PRA). This is Anthranilate phosphoribosyltransferase from Rhodopseudomonas palustris (strain BisA53).